The sequence spans 290 residues: Dihydroorotate dehydrogenase B (NAD(+)), catalytic subunit (290 aa).

Residues Ser-17 and Lys-42–Thr-43 each bind FMN. Residues Lys-42, Asn-67–Leu-71, and Asn-117 each bind substrate. An FMN-binding site is contributed by Asn-117. Ser-120 functions as the Nucleophile in the catalytic mechanism. The FMN site is built by Lys-152 and Ile-177. Substrate is bound at residue Asn-178 to Thr-179. Residues Gly-203, Gly-229 to Gly-230, and Gly-251 to Thr-252 contribute to the FMN site.

Belongs to the dihydroorotate dehydrogenase family. Type 1 subfamily. As to quaternary structure, heterotetramer of 2 PyrK and 2 PyrD type B subunits. Requires FMN as cofactor.

It localises to the cytoplasm. The enzyme catalyses (S)-dihydroorotate + NAD(+) = orotate + NADH + H(+). It functions in the pathway pyrimidine metabolism; UMP biosynthesis via de novo pathway; orotate from (S)-dihydroorotate (NAD(+) route): step 1/1. Its function is as follows. Catalyzes the conversion of dihydroorotate to orotate with NAD(+) as electron acceptor. In Saccharolobus solfataricus (strain ATCC 35092 / DSM 1617 / JCM 11322 / P2) (Sulfolobus solfataricus), this protein is Dihydroorotate dehydrogenase B (NAD(+)), catalytic subunit (pyrD).